Here is a 606-residue protein sequence, read N- to C-terminus: Leucine-rich repeat and immunoglobulin-like domain-containing nogo receptor-interacting protein 2 (606 aa).

A signal peptide spans 1 to 27 (MLHTAISCWQPFLGLAVVLIFMGSTIG). An LRRNT domain is found at 28 to 57 (CPARCECSAQNKSVSCHRRRLIAIPEGIPI). Over 28-545 (CPARCECSAQ…LDLKTILVST (518 aa)) the chain is Extracellular. Asn38 is a glycosylation site (N-linked (GlcNAc...) asparagine). 12 LRR repeats span residues 58–79 (ETKILDLSKNRLKSVNPEEFIS), 82–103 (LLEEIDLSDNIIANVEPGAFNN), 106–127 (NLRSLRLKGNRLKLVPLGVFTG), 130–151 (NLTKLDISENKIVILLDYMFQD), 154–175 (NLKSLEVGDNDLVYISHRAFSG), 178–199 (SLEQLTLEKCNLTAVPTEALSH), 202–223 (SLISLHLKHLNINNMPVYAFKR), 226–247 (HLKHLEIDYWPLLDMMPANSLY), 250–271 (NLTSLSVTNTNLSTVPFLAFKH), 274–295 (YLTHLNLSYNPISTIEAGMFSD), 298–319 (RLQELHIVGAQLRTIEPHSFQG), and 322–343 (FLRVLNVSQNLLETLEENVFSS). Asn130 is a glycosylation site (N-linked (GlcNAc...) asparagine). Asn188 is a glycosylation site (N-linked (GlcNAc...) asparagine). N-linked (GlcNAc...) asparagine glycosylation occurs at Asn279. A glycan (N-linked (GlcNAc...) asparagine) is linked at Asn327. The 55-residue stretch at 355–409 (NPLACDCRLLWILQRQPTLQFGGQQPMCAGPDTIRERSFKDFHSTALSFYFTCKK) folds into the LRRCT domain. One can recognise an Ig-like C2-type domain in the interval 410-499 (PKIREKKLQH…GNDTFTASLT (90 aa)). Cys432 and Cys483 form a disulfide bridge. Residues 546-566 (AMGCFTFLGVVLFCFLLLFVW) traverse the membrane as a helical segment. The Cytoplasmic portion of the chain corresponds to 567–606 (SRGKGKHKNSIDLEYVPRKNNGAVVEGEVAGPRRFNMKMI).

The protein resides in the membrane. In Homo sapiens (Human), this protein is Leucine-rich repeat and immunoglobulin-like domain-containing nogo receptor-interacting protein 2 (LINGO2).